The chain runs to 392 residues: F-box protein At5g65850 (392 aa).

An F-box domain is found at 29-78 (TEKSVQIPVDIIIEILLRLPAKSIATCRCVSKLWISVICRQDFTELFLTR).

The protein is F-box protein At5g65850 of Arabidopsis thaliana (Mouse-ear cress).